The primary structure comprises 184 residues: Bifunctional protein PyrR (184 aa).

Residues V105 to T117 carry the PRPP-binding motif.

It belongs to the purine/pyrimidine phosphoribosyltransferase family. PyrR subfamily.

It carries out the reaction UMP + diphosphate = 5-phospho-alpha-D-ribose 1-diphosphate + uracil. Functionally, regulates the transcription of the pyrimidine nucleotide (pyr) operon in response to exogenous pyrimidines. Also displays a weak uracil phosphoribosyltransferase activity which is not physiologically significant. This is Bifunctional protein PyrR from Rubrobacter xylanophilus (strain DSM 9941 / JCM 11954 / NBRC 16129 / PRD-1).